A 546-amino-acid polypeptide reads, in one-letter code: Chaperonin GroEL (546 aa).

ATP is bound by residues 29-32 (TMGP), Lys50, 86-90 (DGTTT), Gly414, and Asp492.

The protein belongs to the chaperonin (HSP60) family. Forms a cylinder of 14 subunits composed of two heptameric rings stacked back-to-back. Interacts with the co-chaperonin GroES.

Its subcellular location is the cytoplasm. It catalyses the reaction ATP + H2O + a folded polypeptide = ADP + phosphate + an unfolded polypeptide.. Its function is as follows. Together with its co-chaperonin GroES, plays an essential role in assisting protein folding. The GroEL-GroES system forms a nano-cage that allows encapsulation of the non-native substrate proteins and provides a physical environment optimized to promote and accelerate protein folding. This is Chaperonin GroEL from Helicobacter pylori (strain P12).